The chain runs to 124 residues: Heat-labile enterotoxin B chain (124 aa).

An N-terminal signal peptide occupies residues 1–21; sequence MNKVKFYVLFTALLSSLCAHG. A disulfide bridge connects residues Cys-30 and Cys-107.

In terms of assembly, heterohexamer of one A chain and of five B chains.

In terms of biological role, the biological activity of the toxin is produced by the A chain, which activates intracellular adenyl cyclase. The protein is Heat-labile enterotoxin B chain (eltB) of Escherichia coli.